The following is a 382-amino-acid chain: MTEQRPLTIALVAGETSGDILGAGLIRALKERVPNARFVGVAGPRMQAEGCEAWYEMEELAVMGIVEVLGRLRRLLHIRADLTKRFGELKPDVFVGIDAPDFNITLEGNLKKQGIKTIHYVSPSVWAWRQKRVFKIGRATDLVLAFLPFEKAFYDKYNVPCRFIGHTMADAMPLDPDKNAARDVLGIPHDAHCLALLPGSRGAEVEMLSADFLKTAQLLRQTYPDLEIVVPLVNAKRREQFERIKAEVAPDLSVHLLDGMGREAMVASDAALLASGTAALECMLAKCPMVVGYRMKPFTFWLAKRLVKTEYVSLPNLLAGRELVKELLQEECEPQKLAAALLPLLANGKTSHAMHDTFRELHQQIRCNADEQAAQAVLELAQ.

Belongs to the LpxB family.

The enzyme catalyses 2-N,3-O-bis[(3R)-3-hydroxytetradecanoyl]-alpha-D-glucosaminyl 1-phosphate + UDP-2-N,3-O-bis[(3R)-3-hydroxytetradecanoyl]-alpha-D-glucosamine = lipid A disaccharide (E. coli) + UDP + H(+). It catalyses the reaction a lipid X + a UDP-2-N,3-O-bis[(3R)-3-hydroxyacyl]-alpha-D-glucosamine = a lipid A disaccharide + UDP + H(+). It participates in glycolipid biosynthesis; lipid IV(A) biosynthesis; lipid IV(A) from (3R)-3-hydroxytetradecanoyl-[acyl-carrier-protein] and UDP-N-acetyl-alpha-D-glucosamine: step 5/6. Condensation of UDP-2,3-diacylglucosamine and 2,3-diacylglucosamine-1-phosphate to form lipid A disaccharide, a precursor of lipid A, a phosphorylated glycolipid that anchors the lipopolysaccharide to the outer membrane of the cell. In Escherichia fergusonii (strain ATCC 35469 / DSM 13698 / CCUG 18766 / IAM 14443 / JCM 21226 / LMG 7866 / NBRC 102419 / NCTC 12128 / CDC 0568-73), this protein is Lipid-A-disaccharide synthase.